The following is a 277-amino-acid chain: Large ribosomal subunit protein uL2 (277 aa).

Positions 215-277 (GIRPTVRGSV…KLIVKRRNDK (63 aa)) are disordered. Residues 264-277 (KYSDKLIVKRRNDK) show a composition bias toward basic and acidic residues.

The protein belongs to the universal ribosomal protein uL2 family. In terms of assembly, part of the 50S ribosomal subunit. Forms a bridge to the 30S subunit in the 70S ribosome.

One of the primary rRNA binding proteins. Required for association of the 30S and 50S subunits to form the 70S ribosome, for tRNA binding and peptide bond formation. It has been suggested to have peptidyltransferase activity; this is somewhat controversial. Makes several contacts with the 16S rRNA in the 70S ribosome. This chain is Large ribosomal subunit protein uL2, found in Clostridium acetobutylicum (strain ATCC 824 / DSM 792 / JCM 1419 / IAM 19013 / LMG 5710 / NBRC 13948 / NRRL B-527 / VKM B-1787 / 2291 / W).